The chain runs to 206 residues: Putative acetyltransferase OgpAT (206 aa).

One can recognise an N-acetyltransferase domain in the interval 5-205 (VVIRRATAAD…EVVVGRRLLD (201 aa)). Residues 135–138 (HIDL), 144–148 (GRGVG), 175–177 (NPR), and H184 contribute to the acetyl-CoA site.

This sequence belongs to the acetyltransferase family. As to quaternary structure, monomer.

Its function is as follows. Binds acetyl-CoA, but not butyryl-CoA or decanoyl-CoA. May have acetyltransferase activity. This Oceanicola granulosus (strain ATCC BAA-861 / DSM 15982 / KCTC 12143 / HTCC2516) protein is Putative acetyltransferase OgpAT.